A 345-amino-acid chain; its full sequence is GTPase Obg (345 aa).

The 159-residue stretch at 1–159 (MRFIDEASIT…FHLKLELKLL (159 aa)) folds into the Obg domain. The OBG-type G domain maps to 160 to 329 (ADVGIVGLPN…LIQILARQIA (170 aa)). Residues 166-173 (GLPNAGKS), 191-195 (FTTLT), 213-216 (DIPG), 283-286 (NKID), and 310-312 (SAA) each bind GTP. The Mg(2+) site is built by S173 and T193.

The protein belongs to the TRAFAC class OBG-HflX-like GTPase superfamily. OBG GTPase family. Monomer. Mg(2+) is required as a cofactor.

Its subcellular location is the cytoplasm. An essential GTPase which binds GTP, GDP and possibly (p)ppGpp with moderate affinity, with high nucleotide exchange rates and a fairly low GTP hydrolysis rate. Plays a role in control of the cell cycle, stress response, ribosome biogenesis and in those bacteria that undergo differentiation, in morphogenesis control. This is GTPase Obg from Desulforapulum autotrophicum (strain ATCC 43914 / DSM 3382 / VKM B-1955 / HRM2) (Desulfobacterium autotrophicum).